The chain runs to 221 residues: MTKTADLKGSNFTLSVLHLPNDDITQALSMLEQKVAQAPSFFASAPVVINIENVSNEINFVDLKLGVERTGMIPVGITGCKDKEKQAQATSAGFAVMTSFTPQQVTQKANMQPTKVVRTPIRSGQQVYAKDADLVILNHVSPGAEVIADGSIHIHGTLRGRAIAGASGQKEAKIFCKNLQAELISIAGNYWLSDQINKEYWHQNVMVTMVEDHIKIDTLTL.

Belongs to the MinC family. Interacts with MinD and FtsZ.

Its function is as follows. Cell division inhibitor that blocks the formation of polar Z ring septums. Rapidly oscillates between the poles of the cell to destabilize FtsZ filaments that have formed before they mature into polar Z rings. Prevents FtsZ polymerization. This is Probable septum site-determining protein MinC from Aliivibrio salmonicida (strain LFI1238) (Vibrio salmonicida (strain LFI1238)).